A 315-amino-acid chain; its full sequence is Methionyl-tRNA formyltransferase (315 aa).

Residue 110–113 participates in (6S)-5,6,7,8-tetrahydrofolate binding; that stretch reads SLLP.

Belongs to the Fmt family.

It catalyses the reaction L-methionyl-tRNA(fMet) + (6R)-10-formyltetrahydrofolate = N-formyl-L-methionyl-tRNA(fMet) + (6S)-5,6,7,8-tetrahydrofolate + H(+). Its function is as follows. Attaches a formyl group to the free amino group of methionyl-tRNA(fMet). The formyl group appears to play a dual role in the initiator identity of N-formylmethionyl-tRNA by promoting its recognition by IF2 and preventing the misappropriation of this tRNA by the elongation apparatus. The polypeptide is Methionyl-tRNA formyltransferase (Mycolicibacterium paratuberculosis (strain ATCC BAA-968 / K-10) (Mycobacterium paratuberculosis)).